Reading from the N-terminus, the 114-residue chain is T cell receptor beta variable 25-1 (114 aa).

The signal sequence occupies residues 1-21 (MTIRLLCYVGFYFLGAGLMEA). The Ig-like domain maps to 22–114 (DIYQTPRYLV…TSQYLCASSE (93 aa)). Cysteine 42 and cysteine 110 are disulfide-bonded. Asparagine 72 is a glycosylation site (N-linked (GlcNAc...) asparagine).

In terms of assembly, alpha-beta TR is a heterodimer composed of an alpha and beta chain; disulfide-linked. The alpha-beta TR is associated with the transmembrane signaling CD3 coreceptor proteins to form the TR-CD3 (TcR or TCR). The assembly of alpha-beta TR heterodimers with CD3 occurs in the endoplasmic reticulum where a single alpha-beta TR heterodimer associates with one CD3D-CD3E heterodimer, one CD3G-CD3E heterodimer and one CD247 homodimer forming a stable octameric structure. CD3D-CD3E and CD3G-CD3E heterodimers preferentially associate with TR alpha and TR beta chains, respectively. The association of the CD247 homodimer is the last step of TcR assembly in the endoplasmic reticulum and is required for transport to the cell surface.

The protein localises to the cell membrane. V region of the variable domain of T cell receptor (TR) beta chain that participates in the antigen recognition. Alpha-beta T cell receptors are antigen specific receptors which are essential to the immune response and are present on the cell surface of T lymphocytes. Recognize peptide-major histocompatibility (MH) (pMH) complexes that are displayed by antigen presenting cells (APC), a prerequisite for efficient T cell adaptive immunity against pathogens. Binding of alpha-beta TR to pMH complex initiates TR-CD3 clustering on the cell surface and intracellular activation of LCK that phosphorylates the ITAM motifs of CD3G, CD3D, CD3E and CD247 enabling the recruitment of ZAP70. In turn ZAP70 phosphorylates LAT, which recruits numerous signaling molecules to form the LAT signalosome. The LAT signalosome propagates signal branching to three major signaling pathways, the calcium, the mitogen-activated protein kinase (MAPK) kinase and the nuclear factor NF-kappa-B (NF-kB) pathways, leading to the mobilization of transcription factors that are critical for gene expression and essential for T cell growth and differentiation. The T cell repertoire is generated in the thymus, by V-(D)-J rearrangement. This repertoire is then shaped by intrathymic selection events to generate a peripheral T cell pool of self-MH restricted, non-autoaggressive T cells. Post-thymic interaction of alpha-beta TR with the pMH complexes shapes TR structural and functional avidity. This Homo sapiens (Human) protein is T cell receptor beta variable 25-1.